We begin with the raw amino-acid sequence, 466 residues long: 3-isopropylmalate dehydratase large subunit (466 aa).

Cys347, Cys407, and Cys410 together coordinate [4Fe-4S] cluster.

The protein belongs to the aconitase/IPM isomerase family. LeuC type 1 subfamily. As to quaternary structure, heterodimer of LeuC and LeuD. [4Fe-4S] cluster is required as a cofactor.

The enzyme catalyses (2R,3S)-3-isopropylmalate = (2S)-2-isopropylmalate. It functions in the pathway amino-acid biosynthesis; L-leucine biosynthesis; L-leucine from 3-methyl-2-oxobutanoate: step 2/4. Catalyzes the isomerization between 2-isopropylmalate and 3-isopropylmalate, via the formation of 2-isopropylmaleate. The protein is 3-isopropylmalate dehydratase large subunit of Salmonella paratyphi A (strain ATCC 9150 / SARB42).